Here is a 172-residue protein sequence, read N- to C-terminus: Stellate orphon protein at 12D (172 aa).

The protein belongs to the casein kinase 2 subunit beta family. As to quaternary structure, interacts in vitro with the casein kinase 2 alpha subunit (CkII-alpha). The relevance of such interaction is however unclear in vivo. In terms of tissue distribution, probably not expressed in wild-type flies. In males lacking the Y chromosome, it is testis-specific and constitutes the main component of star-shaped crystals.

Unknown. In males lacking the Y chromosome, its strong overexpression leads to the appearance of proteinaceous star-shaped crystals in the primary spermatocytes causing meiotic drive, possibly by interfering with normal casein kinase 2 activity. The protein is Stellate orphon protein at 12D (Ste12DOR) of Drosophila melanogaster (Fruit fly).